The following is a 331-amino-acid chain: GATA transcription factor 12 (331 aa).

Disordered regions lie at residues 30-49 (ENDVVADSTTTTTITDSSNF) and 105-138 (SGFKSRPDPKSDTGSPENPNSSSPIFTTDVSVPA). A compositionally biased stretch (low complexity) spans 34–47 (VADSTTTTTITDSS). Residues 116–134 (DTGSPENPNSSSPIFTTDV) are compositionally biased toward polar residues. A Nuclear localization signal motif is present at residues 139–146 (KARSKRSR). The disordered stretch occupies residues 174–218 (SSQQHLSPPTSPPLLMAPLGKKQAVDGGHRRKKDVSSPESGGAEE). Residues 215–269 (GAEERRCLHCATDKTPQWRTGPMGPKTLCNACGVRYKSGRLVPEYRPAASPTFVL) form a GATA-type zinc finger.

It belongs to the type IV zinc-finger family. Class A subfamily. In terms of tissue distribution, expressed in the vascular cylinder of roots. Expressed in the differentiation zone of the root stele.

Its subcellular location is the nucleus. Its function is as follows. Transcriptional activator that specifically binds 5'-GATA-3' or 5'-GAT-3' motifs within gene promoters. May be involved in the regulation of some light-responsive genes. Transcription activator involved in xylem formation. Functions upstream of NAC030/VND7, a master switch of xylem vessel differentiation. This Arabidopsis thaliana (Mouse-ear cress) protein is GATA transcription factor 12.